The chain runs to 426 residues: Serine--tRNA ligase (426 aa).

233–235 (TAE) provides a ligand contact to L-serine. 264-266 (RSE) lines the ATP pocket. Glu-287 is an L-serine binding site. 351 to 354 (EISS) lines the ATP pocket. Ser-387 provides a ligand contact to L-serine.

The protein belongs to the class-II aminoacyl-tRNA synthetase family. Type-1 seryl-tRNA synthetase subfamily. In terms of assembly, homodimer. The tRNA molecule binds across the dimer.

Its subcellular location is the cytoplasm. It catalyses the reaction tRNA(Ser) + L-serine + ATP = L-seryl-tRNA(Ser) + AMP + diphosphate + H(+). The enzyme catalyses tRNA(Sec) + L-serine + ATP = L-seryl-tRNA(Sec) + AMP + diphosphate + H(+). It participates in aminoacyl-tRNA biosynthesis; selenocysteinyl-tRNA(Sec) biosynthesis; L-seryl-tRNA(Sec) from L-serine and tRNA(Sec): step 1/1. Its function is as follows. Catalyzes the attachment of serine to tRNA(Ser). Is also able to aminoacylate tRNA(Sec) with serine, to form the misacylated tRNA L-seryl-tRNA(Sec), which will be further converted into selenocysteinyl-tRNA(Sec). This chain is Serine--tRNA ligase, found in Pseudomonas savastanoi pv. phaseolicola (strain 1448A / Race 6) (Pseudomonas syringae pv. phaseolicola (strain 1448A / Race 6)).